The primary structure comprises 419 residues: L-rhamnose isomerase (419 aa).

Mn(2+)-binding residues include H262, D294, and D296.

This sequence belongs to the rhamnose isomerase family. In terms of assembly, homotetramer. Mn(2+) serves as cofactor.

Its subcellular location is the cytoplasm. The catalysed reaction is L-rhamnopyranose = L-rhamnulose. It functions in the pathway carbohydrate degradation; L-rhamnose degradation; glycerone phosphate from L-rhamnose: step 1/3. In terms of biological role, catalyzes the interconversion of L-rhamnose and L-rhamnulose. The sequence is that of L-rhamnose isomerase from Salmonella typhimurium (strain LT2 / SGSC1412 / ATCC 700720).